Consider the following 330-residue polypeptide: Molybdate/tungstate import ATP-binding protein WtpC (330 aa).

The 230-residue stretch at 3–232 folds into the ABC transporter domain; that stretch reads LMVEGISKDY…PASEEVAKFL (230 aa). Position 34–41 (34–41) interacts with ATP; that stretch reads GPSGAGKT.

The protein belongs to the ABC transporter superfamily. Sulfate/tungstate importer (TC 3.A.1.6) family. In terms of assembly, the complex is composed of two ATP-binding proteins (WtpC), two transmembrane proteins (WtpB) and a solute-binding protein (WtpA).

The protein localises to the cell membrane. It catalyses the reaction tungstate(in) + ATP + H2O = tungstate(out) + ADP + phosphate + H(+). Part of the ABC transporter complex WtpABC involved in molybdate/tungstate import. Responsible for energy coupling to the transport system. This chain is Molybdate/tungstate import ATP-binding protein WtpC (wtpC), found in Thermococcus kodakarensis (strain ATCC BAA-918 / JCM 12380 / KOD1) (Pyrococcus kodakaraensis (strain KOD1)).